A 252-amino-acid chain; its full sequence is Chitooligosaccharide deacetylase (252 aa).

Mg(2+) contacts are provided by His61 and His125.

The protein belongs to the YdjC deacetylase family. ChbG subfamily. Homodimer. It depends on Mg(2+) as a cofactor.

The protein localises to the cytoplasm. It catalyses the reaction N,N'-diacetylchitobiose + H2O = N-acetyl-beta-D-glucosaminyl-(1-&gt;4)-D-glucosamine + acetate. The catalysed reaction is diacetylchitobiose-6'-phosphate + H2O = N'-monoacetylchitobiose-6'-phosphate + acetate. Its pathway is glycan degradation; chitin degradation. Its function is as follows. Involved in the degradation of chitin. ChbG is essential for growth on the acetylated chitooligosaccharides chitobiose and chitotriose but is dispensable for growth on cellobiose and chitosan dimer, the deacetylated form of chitobiose. Deacetylation of chitobiose-6-P and chitotriose-6-P is necessary for both the activation of the chb promoter by the regulatory protein ChbR and the hydrolysis of phosphorylated beta-glucosides by the phospho-beta-glucosidase ChbF. Catalyzes the removal of only one acetyl group from chitobiose-6-P to yield monoacetylchitobiose-6-P, the inducer of ChbR and the substrate of ChbF. The polypeptide is Chitooligosaccharide deacetylase (Salmonella typhimurium (strain LT2 / SGSC1412 / ATCC 700720)).